Here is a 278-residue protein sequence, read N- to C-terminus: Elongation factor Ts (278 aa).

The tract at residues 82-85 (TDFV) is involved in Mg(2+) ion dislocation from EF-Tu.

Belongs to the EF-Ts family.

It localises to the cytoplasm. Its function is as follows. Associates with the EF-Tu.GDP complex and induces the exchange of GDP to GTP. It remains bound to the aminoacyl-tRNA.EF-Tu.GTP complex up to the GTP hydrolysis stage on the ribosome. The chain is Elongation factor Ts (tsf) from Streptomyces coelicolor (strain ATCC BAA-471 / A3(2) / M145).